Reading from the N-terminus, the 64-residue chain is Copper-specific metallothionein-2 (64 aa).

Residues Cys-3, Cys-5, Cys-9, Cys-11, Cys-16, Cys-18, Cys-22, Cys-24, Cys-27, Cys-33, Cys-40, Cys-44, Cys-50, Cys-52, Cys-56, and Cys-58 each coordinate Cu(+).

Belongs to the metallothionein superfamily. Type 2 family.

The metallothioneins are involved in the cellular sequestration of toxic metal ions and regulation of essential trace elements. This isoform binds exclusively copper. The chain is Copper-specific metallothionein-2 from Callinectes sapidus (Blue crab).